Here is a 234-residue protein sequence, read N- to C-terminus: Octanoyltransferase (234 aa).

Residues 43-231 (IPTRNYFLFV…HFQELFQAEL (189 aa)) form the BPL/LPL catalytic domain. Residues 88–95 (RGGDITYH), 160–162 (AMG), and 173–175 (GFA) each bind substrate. Cys191 (acyl-thioester intermediate) is an active-site residue.

Belongs to the LipB family.

The protein localises to the cytoplasm. It carries out the reaction octanoyl-[ACP] + L-lysyl-[protein] = N(6)-octanoyl-L-lysyl-[protein] + holo-[ACP] + H(+). It functions in the pathway protein modification; protein lipoylation via endogenous pathway; protein N(6)-(lipoyl)lysine from octanoyl-[acyl-carrier-protein]: step 1/2. Its function is as follows. Catalyzes the transfer of endogenously produced octanoic acid from octanoyl-acyl-carrier-protein onto the lipoyl domains of lipoate-dependent enzymes. Lipoyl-ACP can also act as a substrate although octanoyl-ACP is likely to be the physiological substrate. This Christiangramia forsetii (strain DSM 17595 / CGMCC 1.15422 / KT0803) (Gramella forsetii) protein is Octanoyltransferase.